The chain runs to 284 residues: Bifunctional protein FolD (284 aa).

Residues 165–167, threonine 192, and valine 233 contribute to the NADP(+) site; that span reads GRG.

Belongs to the tetrahydrofolate dehydrogenase/cyclohydrolase family. As to quaternary structure, homodimer.

The enzyme catalyses (6R)-5,10-methylene-5,6,7,8-tetrahydrofolate + NADP(+) = (6R)-5,10-methenyltetrahydrofolate + NADPH. It catalyses the reaction (6R)-5,10-methenyltetrahydrofolate + H2O = (6R)-10-formyltetrahydrofolate + H(+). It functions in the pathway one-carbon metabolism; tetrahydrofolate interconversion. In terms of biological role, catalyzes the oxidation of 5,10-methylenetetrahydrofolate to 5,10-methenyltetrahydrofolate and then the hydrolysis of 5,10-methenyltetrahydrofolate to 10-formyltetrahydrofolate. The chain is Bifunctional protein FolD from Corynebacterium glutamicum (strain R).